A 1168-amino-acid polypeptide reads, in one-letter code: DNA-directed RNA polymerase subunit beta (1168 aa).

This sequence belongs to the RNA polymerase beta chain family. As to quaternary structure, the RNAP catalytic core consists of 2 alpha, 1 beta, 1 beta' and 1 omega subunit. When a sigma factor is associated with the core the holoenzyme is formed, which can initiate transcription.

The enzyme catalyses RNA(n) + a ribonucleoside 5'-triphosphate = RNA(n+1) + diphosphate. In terms of biological role, DNA-dependent RNA polymerase catalyzes the transcription of DNA into RNA using the four ribonucleoside triphosphates as substrates. In Corynebacterium kroppenstedtii (strain DSM 44385 / JCM 11950 / CIP 105744 / CCUG 35717), this protein is DNA-directed RNA polymerase subunit beta.